The following is a 160-amino-acid chain: MSEPKQYVMTYEGVKKLEGELEYLKTVKRKEITEKIKVALGYGDLSENSEYDEAKNDQAFTEGKILQLENKLKNAVVVDESEIPKDIVSVGSKVKVKDYDFDEEVEYSIVGSAEADPMSFKISNESPVGNALVGKKIGDVVEVVVPDGVSKFEILDIKRG.

The stretch at 49-75 (SEYDEAKNDQAFTEGKILQLENKLKNA) forms a coiled coil.

It belongs to the GreA/GreB family.

Necessary for efficient RNA polymerase transcription elongation past template-encoded arresting sites. The arresting sites in DNA have the property of trapping a certain fraction of elongating RNA polymerases that pass through, resulting in locked ternary complexes. Cleavage of the nascent transcript by cleavage factors such as GreA or GreB allows the resumption of elongation from the new 3'terminus. GreA releases sequences of 2 to 3 nucleotides. In Clostridium botulinum (strain Eklund 17B / Type B), this protein is Transcription elongation factor GreA.